Consider the following 101-residue polypeptide: DNA-binding protein Fis (101 aa).

Residues 77–96 (QTRAANMLGINRGTLRKKLK) constitute a DNA-binding region (H-T-H motif).

It belongs to the transcriptional regulatory Fis family. As to quaternary structure, homodimer.

Activates ribosomal RNA transcription. Plays a direct role in upstream activation of rRNA promoters. The protein is DNA-binding protein Fis of Shewanella frigidimarina (strain NCIMB 400).